Reading from the N-terminus, the 364-residue chain is Probable dual-specificity RNA methyltransferase RlmN (364 aa).

The active-site Proton acceptor is glutamate 107. The region spanning 113 to 346 (HEYGNSVCVT…ATIRREQGSD (234 aa)) is the Radical SAM core domain. An intrachain disulfide couples cysteine 120 to cysteine 351. [4Fe-4S] cluster-binding residues include cysteine 127, cysteine 131, and cysteine 134. S-adenosyl-L-methionine is bound by residues 177–178 (GE), serine 209, 232–234 (SLH), and asparagine 308. Cysteine 351 serves as the catalytic S-methylcysteine intermediate.

It belongs to the radical SAM superfamily. RlmN family. [4Fe-4S] cluster serves as cofactor.

It localises to the cytoplasm. It catalyses the reaction adenosine(2503) in 23S rRNA + 2 reduced [2Fe-2S]-[ferredoxin] + 2 S-adenosyl-L-methionine = 2-methyladenosine(2503) in 23S rRNA + 5'-deoxyadenosine + L-methionine + 2 oxidized [2Fe-2S]-[ferredoxin] + S-adenosyl-L-homocysteine. The catalysed reaction is adenosine(37) in tRNA + 2 reduced [2Fe-2S]-[ferredoxin] + 2 S-adenosyl-L-methionine = 2-methyladenosine(37) in tRNA + 5'-deoxyadenosine + L-methionine + 2 oxidized [2Fe-2S]-[ferredoxin] + S-adenosyl-L-homocysteine. Functionally, specifically methylates position 2 of adenine 2503 in 23S rRNA and position 2 of adenine 37 in tRNAs. Confers resistance to some classes of antibiotics. In Staphylococcus carnosus (strain TM300), this protein is Probable dual-specificity RNA methyltransferase RlmN.